A 173-amino-acid polypeptide reads, in one-letter code: Photosystem I assembly protein Ycf3 (173 aa).

3 TPR repeats span residues 35–68 (AFSY…EEDP), 72–105 (SYIL…NFKL), and 120–153 (GVQA…APDN).

Belongs to the Ycf3 family.

The protein localises to the plastid. The protein resides in the chloroplast thylakoid membrane. In terms of biological role, essential for the assembly of the photosystem I (PSI) complex. May act as a chaperone-like factor to guide the assembly of the PSI subunits. This chain is Photosystem I assembly protein Ycf3, found in Porphyra purpurea (Red seaweed).